The primary structure comprises 874 residues: Bifunctional uridylyltransferase/uridylyl-removing enzyme (874 aa).

The segment at 1 to 332 (MTLQSPLTFR…NGGASEDAEI (332 aa)) is uridylyltransferase. The uridylyl-removing stretch occupies residues 333-692 (IDEDFQRRGA…ISKKATRGGT (360 aa)). One can recognise an HD domain in the interval 451 to 573 (VDEHSIRLLK…VRDEEYLEYL (123 aa)). ACT domains follow at residues 693–777 (EVFV…RTPN) and 800–874 (LMEF…SVSA).

It belongs to the GlnD family. Requires Mg(2+) as cofactor.

The catalysed reaction is [protein-PII]-L-tyrosine + UTP = [protein-PII]-uridylyl-L-tyrosine + diphosphate. The enzyme catalyses [protein-PII]-uridylyl-L-tyrosine + H2O = [protein-PII]-L-tyrosine + UMP + H(+). With respect to regulation, uridylyltransferase (UTase) activity is inhibited by glutamine, while glutamine activates uridylyl-removing (UR) activity. Modifies, by uridylylation and deuridylylation, the PII regulatory proteins (GlnB and homologs), in response to the nitrogen status of the cell that GlnD senses through the glutamine level. Under low glutamine levels, catalyzes the conversion of the PII proteins and UTP to PII-UMP and PPi, while under higher glutamine levels, GlnD hydrolyzes PII-UMP to PII and UMP (deuridylylation). Thus, controls uridylylation state and activity of the PII proteins, and plays an important role in the regulation of nitrogen assimilation and metabolism. This is Bifunctional uridylyltransferase/uridylyl-removing enzyme from Vibrio campbellii (strain ATCC BAA-1116).